Here is a 505-residue protein sequence, read N- to C-terminus: MTDAVQNETVQEENKLIAERRAKLDEIRKSCKANGHPNDFRRDALAGDLQKEFGEKTKEELEELNHVVAIAGRIMAKRGPFLVIQETSGRIQAYADKEVQKELKEKYQGLDIGDIIGVKGALHKSGKGDLYVNMEEYELLTKALRPLPEKFHGLTDQEMRYRQRYVDLIVNEDSRNAFVVRSKVMSAIRNFMISKQFMEVETPMMHVIPGGASARPFITHHNALDMPMYLRIAPELYLKRLVVGGFDRVFEINRNFRNEGLSPRHNPEFTMMEFYMAYADYKDLMDFTEELLSSVALEVLGSTSMPYGEDTVEFGGKYARMSMFEAIKHYNPDHAQIQALTEEDLQNRELMVSIAKSVHVEVEPFWTCGQLLEEIFGETAEPKLMQPTFITGYPADISPLARRSDDNPFFTDRFEFFIGGREVANGFSELNDAEDQDARFKAQVEAKESGDDEAMFYDADYITALEHGLPPTAGQGIGIDRLVMLLTNTHTIRDVILFPAMRPQA.

Residues glutamate 415 and glutamate 422 each coordinate Mg(2+).

Belongs to the class-II aminoacyl-tRNA synthetase family. Homodimer. It depends on Mg(2+) as a cofactor.

The protein localises to the cytoplasm. It catalyses the reaction tRNA(Lys) + L-lysine + ATP = L-lysyl-tRNA(Lys) + AMP + diphosphate. This Vibrio parahaemolyticus serotype O3:K6 (strain RIMD 2210633) protein is Lysine--tRNA ligase.